The following is a 153-amino-acid chain: Transcriptional repressor NrdR (153 aa).

A disordered region spans residues 1–22 (MRCPACHHNGTRVLDSRPAHEG). Residues 3–34 (CPACHHNGTRVLDSRPAHEGRSIRRRRECESC) fold into a zinc finger. In terms of domain architecture, ATP-cone spans 49 to 139 (LIVVKKDGTR…VYRQFKDINV (91 aa)).

The protein belongs to the NrdR family. Zn(2+) is required as a cofactor.

Its function is as follows. Negatively regulates transcription of bacterial ribonucleotide reductase nrd genes and operons by binding to NrdR-boxes. The polypeptide is Transcriptional repressor NrdR (Halalkalibacterium halodurans (strain ATCC BAA-125 / DSM 18197 / FERM 7344 / JCM 9153 / C-125) (Bacillus halodurans)).